Reading from the N-terminus, the 216-residue chain is Protein InaA (216 aa).

The protein belongs to the protein kinase superfamily. KdkA/RfaP family.

Functionally, may be an environmental sensor responsive to several stimuli, including internal pH, proton motive force, temperature, and possibly other unknown factors. The sequence is that of Protein InaA (inaA) from Escherichia coli (strain K12).